Here is a 313-residue protein sequence, read N- to C-terminus: Small ribosomal subunit protein uS2 (313 aa).

Residues 234 to 243 show a composition bias toward basic and acidic residues; it reads DEEAKEEKTK. A disordered region spans residues 234–313; that stretch reads DEEAKEEKTK…ASKAEAEEGK (80 aa). The span at 244–256 shows a compositional bias: basic residues; the sequence is AKTTAKKVVTKKA. Residues 266–297 show a composition bias toward basic and acidic residues; it reads AEKKSEKPTTEKRPTKEAAETKETSEEPKTKE.

Belongs to the universal ribosomal protein uS2 family.

The sequence is that of Small ribosomal subunit protein uS2 from Coxiella burnetii (strain Dugway 5J108-111).